The following is a 623-amino-acid chain: MGDLPGSGSTAQPRDAAVTGTGGNSTAGGGSSVGSTAVDRPPSPARLSHTSEKHPKVTLTELNMLRRHRELCDVVLNVGGRKIFAHRVILSACSSYFCAMFTGELEESRQTEVTIRDIDENAMELLIDFCYTAHIIVEESNVQTLLPAACLLQLVEIQDICCEFLKRQLDPTNCLGIRAFADTHSCRELLRIADKFTQHNFQEVMESEEFLLLPVGQLVDIICSDELNVRSEEQVFNAVMSWLKYNVAERRQHLAQVLQHVRLPLLSPKFLVGTVGSDLLVRSDEACRDLVDEAKNYLLLPQERPLMQGPRTRPRKPTRRGEVLFAVGGWCSGDAIASVERFDPQTNDWKMVAPMSKRRCGVGVAVLNDLLYAVGGHDGQSYLNSIERYDPQTNQWSCDVAPTTSCRTSVGVAVLDEFLYAVGGQDGVQCLNHVERYDPKENKWSKVAPMTTRRLGVAVAVLGGFLYAIGGSDGQCPLNTVERYDPRHNKWVAVSPMSTRRKHLGCAVFNNYIYAVGGRDDCMELSSAERYNPLTNTWSPIVAMTSRRSGVGLAVVNGQLYAVGGFDGSAYLKTIEVYDPETNQWRLCGCMNYRRLGGGVGVMRAPQTENYMWCENSFKQPNS.

The tract at residues 1-54 (MGDLPGSGSTAQPRDAAVTGTGGNSTAGGGSSVGSTAVDRPPSPARLSHTSEKH) is disordered. T19 carries the post-translational modification Phosphothreonine. Gly residues predominate over residues 20–32 (GTGGNSTAGGGSS). In terms of domain architecture, BTB spans 72 to 139 (CDVVLNVGGR…CYTAHIIVEE (68 aa)). The region spanning 174–276 (CLGIRAFADT…SPKFLVGTVG (103 aa)) is the BACK domain. 6 Kelch repeats span residues 323–369 (VLFA…VLND), 371–417 (LYAV…VLDE), 418–464 (FLYA…VLGG), 466–511 (LYAI…VFNN), 513–558 (IYAV…VVNG), and 559–605 (QLYA…VMRA).

The protein operates within protein modification; protein ubiquitination. Probable substrate-specific adapter of an E3 ubiquitin-protein ligase complex which mediates the ubiquitination and subsequent proteasomal degradation of target proteins. May have a role in synapse differentiation and growth. This is Kelch-like protein diablo from Drosophila simulans (Fruit fly).